The primary structure comprises 481 residues: Glutamyl-tRNA(Gln) amidotransferase subunit A (481 aa).

Residues K74 and S149 each act as charge relay system in the active site. The Acyl-ester intermediate role is filled by S173.

It belongs to the amidase family. GatA subfamily. In terms of assembly, heterotrimer of A, B and C subunits.

The enzyme catalyses L-glutamyl-tRNA(Gln) + L-glutamine + ATP + H2O = L-glutaminyl-tRNA(Gln) + L-glutamate + ADP + phosphate + H(+). Functionally, allows the formation of correctly charged Gln-tRNA(Gln) through the transamidation of misacylated Glu-tRNA(Gln) in organisms which lack glutaminyl-tRNA synthetase. The reaction takes place in the presence of glutamine and ATP through an activated gamma-phospho-Glu-tRNA(Gln). This is Glutamyl-tRNA(Gln) amidotransferase subunit A from Francisella tularensis subsp. tularensis (strain FSC 198).